A 206-amino-acid polypeptide reads, in one-letter code: Imidazoleglycerol-phosphate dehydratase (206 aa).

Belongs to the imidazoleglycerol-phosphate dehydratase family.

The protein resides in the cytoplasm. It carries out the reaction D-erythro-1-(imidazol-4-yl)glycerol 3-phosphate = 3-(imidazol-4-yl)-2-oxopropyl phosphate + H2O. The protein operates within amino-acid biosynthesis; L-histidine biosynthesis; L-histidine from 5-phospho-alpha-D-ribose 1-diphosphate: step 6/9. In Saccharopolyspora erythraea (strain ATCC 11635 / DSM 40517 / JCM 4748 / NBRC 13426 / NCIMB 8594 / NRRL 2338), this protein is Imidazoleglycerol-phosphate dehydratase.